We begin with the raw amino-acid sequence, 255 residues long: Pimeloyl-[acyl-carrier protein] methyl ester esterase (255 aa).

One can recognise an AB hydrolase-1 domain in the interval Leu-16 to Pro-241. Substrate-binding positions include Trp-22, Ser-81–Leu-82, and Phe-142–Gln-146. The active-site Nucleophile is Ser-81. Residues Asp-206 and His-234 contribute to the active site. His-234 is a substrate binding site.

The protein belongs to the AB hydrolase superfamily. Carboxylesterase BioH family. Monomer.

It is found in the cytoplasm. The enzyme catalyses 6-carboxyhexanoyl-[ACP] methyl ester + H2O = 6-carboxyhexanoyl-[ACP] + methanol + H(+). The protein operates within cofactor biosynthesis; biotin biosynthesis. In terms of biological role, the physiological role of BioH is to remove the methyl group introduced by BioC when the pimeloyl moiety is complete. It allows to synthesize pimeloyl-ACP via the fatty acid synthetic pathway through the hydrolysis of the ester bonds of pimeloyl-ACP esters. Also displays a weak thioesterase activity. Can form a complex with CoA, and may be involved in the condensation of CoA and pimelic acid into pimeloyl-CoA, a precursor in biotin biosynthesis. This Serratia marcescens protein is Pimeloyl-[acyl-carrier protein] methyl ester esterase.